A 231-amino-acid polypeptide reads, in one-letter code: ATP phosphoribosyltransferase (231 aa).

It belongs to the ATP phosphoribosyltransferase family. Short subfamily. In terms of assembly, heteromultimer composed of HisG and HisZ subunits.

It localises to the cytoplasm. It catalyses the reaction 1-(5-phospho-beta-D-ribosyl)-ATP + diphosphate = 5-phospho-alpha-D-ribose 1-diphosphate + ATP. It functions in the pathway amino-acid biosynthesis; L-histidine biosynthesis; L-histidine from 5-phospho-alpha-D-ribose 1-diphosphate: step 1/9. Catalyzes the condensation of ATP and 5-phosphoribose 1-diphosphate to form N'-(5'-phosphoribosyl)-ATP (PR-ATP). Has a crucial role in the pathway because the rate of histidine biosynthesis seems to be controlled primarily by regulation of HisG enzymatic activity. The chain is ATP phosphoribosyltransferase from Psychrobacter arcticus (strain DSM 17307 / VKM B-2377 / 273-4).